The chain runs to 237 residues: RNA chaperone ProQ (237 aa).

The interval 106-188 (AKARVQAQRA…QPRPVPVTDI (83 aa)) is disordered. Over residues 146-158 (PRREAGAAPENRK) the composition is skewed to basic and acidic residues.

It belongs to the ProQ family.

The protein resides in the cytoplasm. RNA chaperone with significant RNA binding, RNA strand exchange and RNA duplexing activities. May regulate ProP activity through an RNA-based, post-transcriptional mechanism. The polypeptide is RNA chaperone ProQ (Yersinia pseudotuberculosis serotype O:1b (strain IP 31758)).